We begin with the raw amino-acid sequence, 201 residues long: Holliday junction branch migration complex subunit RuvA (201 aa).

Residues 1–63 form a domain I region; it reads MIEYIKGEIA…EDAYVLYGFA (63 aa). Residues 64-142 are domain II; sequence DKQERELFLL…TGAMAATAVG (79 aa). The flexible linker stretch occupies residues 143–153; the sequence is GAAGALLPAMN. Residues 153-201 are domain III; the sequence is NAEVQEEAIAALTMLGFAAAPSQKAVLAILKEEPDAPVEKVIKLALKRL.

This sequence belongs to the RuvA family. As to quaternary structure, homotetramer. Forms an RuvA(8)-RuvB(12)-Holliday junction (HJ) complex. HJ DNA is sandwiched between 2 RuvA tetramers; dsDNA enters through RuvA and exits via RuvB. An RuvB hexamer assembles on each DNA strand where it exits the tetramer. Each RuvB hexamer is contacted by two RuvA subunits (via domain III) on 2 adjacent RuvB subunits; this complex drives branch migration. In the full resolvosome a probable DNA-RuvA(4)-RuvB(12)-RuvC(2) complex forms which resolves the HJ.

Its subcellular location is the cytoplasm. Functionally, the RuvA-RuvB-RuvC complex processes Holliday junction (HJ) DNA during genetic recombination and DNA repair, while the RuvA-RuvB complex plays an important role in the rescue of blocked DNA replication forks via replication fork reversal (RFR). RuvA specifically binds to HJ cruciform DNA, conferring on it an open structure. The RuvB hexamer acts as an ATP-dependent pump, pulling dsDNA into and through the RuvAB complex. HJ branch migration allows RuvC to scan DNA until it finds its consensus sequence, where it cleaves and resolves the cruciform DNA. The sequence is that of Holliday junction branch migration complex subunit RuvA from Bacteroides fragilis (strain ATCC 25285 / DSM 2151 / CCUG 4856 / JCM 11019 / LMG 10263 / NCTC 9343 / Onslow / VPI 2553 / EN-2).